Reading from the N-terminus, the 635-residue chain is Threonine--tRNA ligase (635 aa).

The 62-residue stretch at 1–62 (MITITLPDGS…EHDAILRIIT (62 aa)) folds into the TGS domain. The interval 244-535 (DHRKIGKAQD…LIEHYAGIWP (292 aa)) is catalytic. Cys-335, His-386, and His-512 together coordinate Zn(2+).

This sequence belongs to the class-II aminoacyl-tRNA synthetase family. Homodimer. Zn(2+) serves as cofactor.

Its subcellular location is the cytoplasm. It carries out the reaction tRNA(Thr) + L-threonine + ATP = L-threonyl-tRNA(Thr) + AMP + diphosphate + H(+). Catalyzes the attachment of threonine to tRNA(Thr) in a two-step reaction: L-threonine is first activated by ATP to form Thr-AMP and then transferred to the acceptor end of tRNA(Thr). Also edits incorrectly charged L-seryl-tRNA(Thr). This chain is Threonine--tRNA ligase, found in Xylella fastidiosa (strain M23).